Here is a 333-residue protein sequence, read N- to C-terminus: Foldase protein PrsA (333 aa).

Positions 1 to 19 (MKKRHLLIAGLACMTILGA) are cleaved as a signal peptide. C20 carries N-palmitoyl cysteine lipidation. Residue C20 is the site of S-diacylglycerol cysteine attachment. The PpiC domain maps to 155–245 (LIEVEASHIL…YGYHIILVTD (91 aa)). The tract at residues 291–333 (GLFDLPDAPPVEDTPEIDGEDASDEAEDQAEDADENAEEEDES) is disordered. The span at 303 to 333 (DTPEIDGEDASDEAEDQAEDADENAEEEDES) shows a compositional bias: acidic residues.

This sequence belongs to the PrsA family.

It is found in the cell membrane. It catalyses the reaction [protein]-peptidylproline (omega=180) = [protein]-peptidylproline (omega=0). Its function is as follows. Plays a major role in protein secretion by helping the post-translocational extracellular folding of several secreted proteins. This chain is Foldase protein PrsA, found in Halalkalibacterium halodurans (strain ATCC BAA-125 / DSM 18197 / FERM 7344 / JCM 9153 / C-125) (Bacillus halodurans).